A 485-amino-acid polypeptide reads, in one-letter code: Rhamnulokinase (485 aa).

Residue Ala11 to Arg15 participates in ATP binding. Residues Ala79 and His234–Thr236 contribute to the substrate site. The Proton acceptor role is filled by Asp235. Residue Thr257 coordinates ATP. Asn294 is a substrate binding site. 2 residues coordinate ATP: Gln302 and Gly401.

It belongs to the rhamnulokinase family. The cofactor is Mg(2+).

The enzyme catalyses L-rhamnulose + ATP = L-rhamnulose 1-phosphate + ADP + H(+). Its pathway is carbohydrate degradation; L-rhamnose degradation; glycerone phosphate from L-rhamnose: step 2/3. In terms of biological role, involved in the catabolism of L-rhamnose (6-deoxy-L-mannose). Catalyzes the transfer of the gamma-phosphate group from ATP to the 1-hydroxyl group of L-rhamnulose to yield L-rhamnulose 1-phosphate. The sequence is that of Rhamnulokinase from Ligilactobacillus salivarius (strain UCC118) (Lactobacillus salivarius).